We begin with the raw amino-acid sequence, 258 residues long: Regulatory protein RecX (258 aa).

This sequence belongs to the RecX family.

Its subcellular location is the cytoplasm. Functionally, modulates RecA activity. In Streptococcus gordonii (strain Challis / ATCC 35105 / BCRC 15272 / CH1 / DL1 / V288), this protein is Regulatory protein RecX.